The following is a 120-amino-acid chain: CLAVATA3/ESR (CLE)-related protein 9 (120 aa).

The first 26 residues, Met1–Ala26, serve as a signal peptide directing secretion. A glycan (N-linked (GlcNAc...) asparagine) is linked at Asn35. Residues Arg85–Asn120 form a disordered region. Basic and acidic residues predominate over residues Ile100–Leu110. Hydroxyproline is present on residues Pro112 and Pro115. Pro115 is a glycosylation site (O-linked (Ara...) hydroxyproline).

Belongs to the CLV3/ESR signal peptide family. Post-translationally, the O-glycosylation (arabinosylation) of the hydroxyproline Pro-115 enhances binding affinity of the CLE9p peptide for its receptor. Mostly expressed in leaves, flowers, stems and apex, and, to a lower extent, in seedlings, roots, siliques and pollen.

It localises to the secreted. The protein localises to the extracellular space. Extracellular signal peptide that regulates cell fate. Represses root apical meristem maintenance. Regulates the transition of protophloem cells from proliferation to differentiation, thus impinging on postembryonic growth capacity of the root meristem; this signaling pathway requires CRN and CLV2. In Arabidopsis thaliana (Mouse-ear cress), this protein is CLAVATA3/ESR (CLE)-related protein 9.